The following is a 193-amino-acid chain: DNA damage-inducible transcript 4-like protein (193 aa).

It belongs to the DDIT4 family. In terms of tissue distribution, expressed in heart, skeletal muscle and testis.

The protein resides in the cytoplasm. In terms of biological role, inhibits cell growth by regulating the TOR signaling pathway upstream of the TSC1-TSC2 complex and downstream of AKT1. The sequence is that of DNA damage-inducible transcript 4-like protein (Ddit4l) from Rattus norvegicus (Rat).